A 427-amino-acid chain; its full sequence is Caspase recruitment domain-containing protein 8 (427 aa).

Residues 1–23 (MGIPTSSVSEEQESSEGQDSGDI) form a disordered region. The interval 51 to 186 (FLGPEGNVDV…FYAVLEKPSF (136 aa)) is ZU5. The FIIND domain occupies 51–336 (FLGPEGNVDV…IQLGAASAPP (286 aa)). Residues 187–336 (SLMGILLRIA…IQLGAASAPP (150 aa)) form a UPA region. One can recognise a CARD domain in the interval 336-426 (PAFSGAAFVK…YLVSYLRQQS (91 aa)).

Interacts with DPP9; leading to inhibit activation of the inflammasome. DPP9 acts via formation of a ternary complex, composed of a DPP9 homodimer, one full-length CARD8 protein, and one cleaved C-terminus of CARD8 (Caspase recruitment domain-containing protein 8, C-terminus). Interacts with DPP8; leading to inhibit activation of the inflammasome, probably via formation of a ternary complex with DPP8. Interacts with NLRP3. Interacts with IKBKG/NEMO. Interacts with DRAL. Binds to caspase-1 (CASP1), CARD16/pseudo-ICE and CARD18/ICEBERG. Interacts with NLRP2 (via NACHT domain). In terms of assembly, interacts with the C-terminal part of CARD8 (Caspase recruitment domain-containing protein 8, C-terminus) in absence of pathogens and other damage-associated signals. As to quaternary structure, interacts with the N-terminal part of CARD8 (Caspase recruitment domain-containing protein 8, N-terminus) in absence of pathogens and other damage-associated signals. Homomultimer; forms the CARD8 inflammasome polymeric complex, a filament composed of homopolymers of this form in response to pathogens and other damage-associated signals. The CARD8 inflammasome polymeric complex directly recruits pro-caspase-1 (proCASP1) independently of PYCARD/ASC. Interacts (via CARD domain) with CASP1 (via CARD domain); leading to CASP1 activation. Undergoes autocatalytic processing within the FIIND domain to generate the N-terminal and C-terminal parts, which are associated non-covalently in absence of pathogens and other damage-associated signals. Post-translationally, ubiquitinated by the N-end rule pathway in response to pathogens and other damage-associated signals, leading to its degradation by the proteasome and subsequent release of the cleaved C-terminal part of the protein (Caspase recruitment domain-containing protein 8, C-terminus), which polymerizes and forms the CARD8 inflammasome.

It localises to the cytoplasm. The protein resides in the nucleus. The protein localises to the inflammasome. CARD8 inflammasome is inhibited by DPP8 and DPP9, which sequester the C-terminal fragment of CARD8 (Caspase recruitment domain-containing protein 8, C-terminus) in a ternary complex, thereby preventing CARD8 oligomerization and activation. CARD8 inflammasome is activated by Val-boroPro (Talabostat, PT-100), an inhibitor of dipeptidyl peptidases DPP8 and DPP9. Val-boroPro relieves inhibition of DPP8 and/or DPP9 by inducing the proteasome-mediated destruction of the N-terminal part of CARD8, releasing its C-terminal part from autoinhibition. Inflammasome sensor, which mediates inflammasome activation in response to various pathogen-associated signals, leading to subsequent pyroptosis of CD4(+) T-cells and macrophages. Inflammasomes are supramolecular complexes that assemble in the cytosol in response to pathogens and other damage-associated signals and play critical roles in innate immunity and inflammation. Acts as a recognition receptor (PRR): recognizes specific pathogens and other damage-associated signals, such as Val-boroPro inhibitor, and mediates CARD8 inflammasome activation. In response to pathogen-associated signals, the N-terminal part of CARD8 is degraded by the proteasome, releasing the cleaved C-terminal part of the protein (Caspase recruitment domain-containing protein 8, C-terminus), which polymerizes to initiate the formation of the inflammasome complex: the CARD8 inflammasome directly recruits pro-caspase-1 (proCASP1) independently of PYCARD/ASC and promotes caspase-1 (CASP1) activation, which subsequently cleaves and activates inflammatory cytokines IL1B and IL18 and gasdermin-D (GSDMD), leading to pyroptosis. Also acts as a negative regulator of the NLRP3 inflammasome. May also act as an inhibitor of NF-kappa-B activation. Its function is as follows. Constitutes the precursor of the CARD8 inflammasome, which mediates autoproteolytic processing within the FIIND domain to generate the N-terminal and C-terminal parts, which are associated non-covalently in absence of pathogens and other damage-associated signals. In terms of biological role, regulatory part that prevents formation of the CARD8 inflammasome: in absence of pathogens and other damage-associated signals, interacts with the C-terminal part of CARD8 (Caspase recruitment domain-containing protein 8, C-terminus), preventing activation of the CARD8 inflammasome. In response to pathogen-associated signals, this part is ubiquitinated by the N-end rule pathway and degraded by the proteasome, releasing the cleaved C-terminal part of the protein, which polymerizes and forms the CARD8 inflammasome. Functionally, constitutes the active part of the CARD8 inflammasome. In absence of pathogens and other damage-associated signals, interacts with the N-terminal part of CARD8 (Caspase recruitment domain-containing protein 8, N-terminus), preventing activation of the CARD8 inflammasome. In response to pathogen-associated signals, the N-terminal part of CARD8 is degraded by the proteasome, releasing this form, which polymerizes to form the CARD8 inflammasome complex: the CARD8 inflammasome complex then directly recruits pro-caspase-1 (proCASP1) and promotes caspase-1 (CASP1) activation, leading to gasdermin-D (GSDMD) cleavage and subsequent pyroptosis. The sequence is that of Caspase recruitment domain-containing protein 8 from Pongo abelii (Sumatran orangutan).